A 782-amino-acid chain; its full sequence is Protein bicaudal D (782 aa).

Residues 15 to 77 (VQDLQMEVER…RHELDITQEA (63 aa)) are a coiled coil. Serine 103 is subject to Phosphoserine. The stretch at 107–249 (ETSLNLQIFD…LETLQGEREA (143 aa)) forms a coiled coil. A phosphoserine mark is found at serine 285, serine 288, and serine 305. The residue at position 306 (threonine 306) is a Phosphothreonine. At serine 310 the chain carries Phosphoserine. Coiled-coil stretches lie at residues 320–368 (SEIH…FMSR) and 444–477 (TTTL…TLTH). The residue at position 528 (serine 528) is a Phosphoserine. Coiled coils occupy residues 603–630 (EKVN…KREQ) and 695–743 (CEEY…MEMD). The segment at 699 to 722 (VTQVDDLNRQLEAAEEEKKTLNQL) is interaction with Rab6. Positions 744–782 (REMRHVRRPMPAQRGTSGKSSFSTRPSSRNPASSNANPF) are disordered. Residues 757–767 (RGTSGKSSFST) show a composition bias toward polar residues. Positions 768–782 (RPSSRNPASSNANPF) are enriched in low complexity.

It belongs to the BicD family. In terms of assembly, may homodimerize but does not interact with BicDR. Interacts (via C-terminal domain) with Rab6. In ovaries, expressed in oocyte and nurse cells.

It localises to the cytoplasm. The protein localises to the cytoskeleton. This protein is essential for differentiation. It may play a role in localizing of Nanos (a maternal determinant) activity in oocytes. Functions redundantly with BicDR. During oogenesis, plays a specific role, together with Rab6 but independently of Sec5, in the polarization of the oocyte microtubule cytoskeleton, in oskar mRNA localization and in the anterodorsal secretion of grk. Plays a role in the biogenesis of annulate lamellae containing nuclear pore complex components. During macrochaetae development, together with BicDR, involved in Rab 6 and Spn-F stability and distribution and actin cytoskeleton organization. This Drosophila melanogaster (Fruit fly) protein is Protein bicaudal D.